The sequence spans 2350 residues: Probable JmjC domain-containing histone demethylation protein 2C (2350 aa).

Disordered regions lie at residues 96 to 302 (TRAQ…LQEC) and 314 to 336 (PKDRLVSRTPTPKCVTDIKNDTH). A compositionally biased stretch (polar residues) spans 98–127 (AQANSPRPAMNSQAAVPKQNTHQQQQQRSI). Residues Ser135 and Ser138 each carry the phosphoserine modification. A compositionally biased stretch (basic and acidic residues) spans 141-160 (DEEKMKEDKYDCVSRGENPK). A compositionally biased stretch (basic residues) spans 161–171 (GKNKHVVTKRR). Basic and acidic residues predominate over residues 172 to 189 (KPEEAEKRLSMKRLRTDN). Low complexity predominate over residues 190 to 200 (ASDASESSDAE). 2 positions are modified to phosphoserine: Ser191 and Ser194. Residues 257-280 (QEDKNHNEGEKPKSTDSHLQDKMT) are compositionally biased toward basic and acidic residues. Positions 281-302 (LRSSEQATVADHNSNDSVLQEC) are enriched in polar residues. Residues Ser294 and Ser320 each carry the phosphoserine modification. Thr324 bears the Phosphothreonine mark. Phosphoserine is present on residues Ser420, Ser436, Ser457, Ser458, Ser460, Ser471, and Ser762. Disordered regions lie at residues 426–486 (SVTE…NSQA), 747–766 (SSAEPHRPHKITVHSSPPLT), 859–883 (RENYSRVVPSSSSPKSHAIKQDKDV), 1030–1083 (RKES…DQSL), and 1422–1508 (EKVS…VPRS). 2 stretches are compositionally biased toward low complexity: residues 863–874 (SRVVPSSSSPKS) and 1034–1045 (SYSSLSPPTLTP). Polar residues predominate over residues 1071–1083 (SQSNFKNSSDQSL). Residues 1454–1463 (KRQPKPTYKK) are compositionally biased toward basic residues. Residues 1464-1480 (KQNDLQKRKGEVEEDSK) show a composition bias toward basic and acidic residues. The segment at 1657 to 1682 (CDACEATLFNVHWVCRKCGFVACLDC) adopts a C6-type zinc-finger fold. Residues 1776–1818 (KTSVSLPESQQQNSPQKSQTNGNSSPGSASTDSRLTPPESQSP) are compositionally biased toward polar residues. Residues 1776–1874 (KTSVSLPESQ…PASQSNEQGS (99 aa)) are disordered. Ser1800 bears the Phosphoserine mark. The segment covering 1826 to 1849 (AEQKSREEKQENKEFTLEREIKED) has biased composition (basic and acidic residues). Residues 1855–1874 (SDSPNGSTSPPASQSNEQGS) are compositionally biased toward polar residues. The LXXLL motif signature appears at 1876–1880 (LRDLL). A disordered region spans residues 1933–1962 (PNKTSKINIKSEPNEEPKESSLPATDESNK). Lys1942 participates in a covalent cross-link: Glycyl lysine isopeptide (Lys-Gly) (interchain with G-Cter in SUMO2). Residues 2084–2308 (MPTRYEDFLR…QSFHLTQELR (225 aa)) enclose the JmjC domain. 3 residues coordinate Fe cation: His2146, Glu2148, and His2276.

It belongs to the JHDM2 histone demethylase family. The cofactor is Fe(2+).

Its subcellular location is the nucleus. Its function is as follows. Probable histone demethylase that specifically demethylates 'Lys-9' of histone H3, thereby playing a central role in histone code. Demethylation of Lys residue generates formaldehyde and succinate. May be involved in hormone-dependent transcriptional activation, by participating in recruitment to androgen-receptor target genes. The protein is Probable JmjC domain-containing histone demethylation protein 2C (Jmjd1c) of Mus musculus (Mouse).